A 224-amino-acid polypeptide reads, in one-letter code: Steroid receptor RNA activator 1 (224 aa).

2 disordered regions span residues 1–90 (MAEL…EPTS) and 201–224 (AANEEKSAATAEKNHTIPGFQQAS). Phosphoserine is present on residues S48, S57, and S75. The span at 58–76 (PGPPPMGPPPPSSKAPRSP) shows a compositional bias: pro residues. Positions 201–215 (AANEEKSAATAEKNH) are enriched in basic and acidic residues.

It belongs to the SRA1 family. In terms of assembly, SRA1 RNA exists in a ribonucleoprotein complex containing NCOA1. The RNA also forms a complex with PUS1 and RARG in the nucleus. Interacts with AR. As to expression, highly expressed in liver and skeletal muscle and to a lesser extent in brain. Also expressed in both normal and tumorigenic breast epithelial cell lines. Significantly up-regulated in human tumors of the breast, ovary, and uterus.

Its subcellular location is the nucleus. The protein localises to the cytoplasm. Functionally, functional RNA which acts as a transcriptional coactivator that selectively enhances steroid receptor-mediated transactivation ligand-independently through a mechanism involving the modulating N-terminal domain (AF-1) of steroid receptors. Also mediates transcriptional coactivation of steroid receptors ligand-dependently through the steroid-binding domain (AF-2). Enhances cellular proliferation and differentiation and promotes apoptosis in vivo. May play a role in tumorigenesis. The protein is Steroid receptor RNA activator 1 of Homo sapiens (Human).